A 305-amino-acid chain; its full sequence is tRNA pseudouridine synthase B (305 aa).

D41 (nucleophile) is an active-site residue.

It belongs to the pseudouridine synthase TruB family. Type 1 subfamily.

The enzyme catalyses uridine(55) in tRNA = pseudouridine(55) in tRNA. Responsible for synthesis of pseudouridine from uracil-55 in the psi GC loop of transfer RNAs. The polypeptide is tRNA pseudouridine synthase B (Prochlorococcus marinus (strain MIT 9515)).